Here is a 274-residue protein sequence, read N- to C-terminus: 2,3,4,5-tetrahydropyridine-2,6-dicarboxylate N-succinyltransferase (274 aa).

Substrate contacts are provided by arginine 103 and aspartate 140.

This sequence belongs to the transferase hexapeptide repeat family. As to quaternary structure, homotrimer.

It localises to the cytoplasm. It catalyses the reaction (S)-2,3,4,5-tetrahydrodipicolinate + succinyl-CoA + H2O = (S)-2-succinylamino-6-oxoheptanedioate + CoA. It functions in the pathway amino-acid biosynthesis; L-lysine biosynthesis via DAP pathway; LL-2,6-diaminopimelate from (S)-tetrahydrodipicolinate (succinylase route): step 1/3. This Haemophilus ducreyi (strain 35000HP / ATCC 700724) protein is 2,3,4,5-tetrahydropyridine-2,6-dicarboxylate N-succinyltransferase.